The following is a 453-amino-acid chain: Putative receptor-like protein kinase At2g30940 (453 aa).

Residues 60-80 (ASASIAFLLVLIISVLLCFIF) form a helical membrane-spanning segment. Position 155 is a phosphothreonine (T155). The 263-residue stretch at 166-428 (FADDNVITKG…IHMLQPHDLL (263 aa)) folds into the Protein kinase domain. Residues 172–180 (ITKGDSSTV) and K194 contribute to the ATP site. Residue Y240 is modified to Phosphotyrosine. The Proton acceptor role is filled by D293. S297 is modified (phosphoserine). Phosphothreonine is present on T322.

It belongs to the protein kinase superfamily.

Its subcellular location is the cell membrane. It carries out the reaction L-seryl-[protein] + ATP = O-phospho-L-seryl-[protein] + ADP + H(+). The catalysed reaction is L-threonyl-[protein] + ATP = O-phospho-L-threonyl-[protein] + ADP + H(+). This is Putative receptor-like protein kinase At2g30940 from Arabidopsis thaliana (Mouse-ear cress).